Here is a 637-residue protein sequence, read N- to C-terminus: Early transcription factor 70 kDa subunit (637 aa).

The 154-residue stretch at Arg32–Glu185 folds into the Helicase ATP-binding domain. Residue His45–Thr52 participates in ATP binding. The DEXH box motif lies at Asp135–His138. One can recognise a Helicase C-terminal domain in the interval Lys327–Leu507.

It belongs to the helicase family. VETF subfamily. As to quaternary structure, heterodimer of a 70 kDa and a 82 kDa subunit. Part of the early transcription complex composed of ETF, RAP94/OPG109, and the DNA-directed RNA polymerase.

The protein resides in the virion. Acts with RNA polymerase to initiate transcription from early gene promoters. Is recruited by the RPO-associated protein of 94 kDa RAP94/OPG109 to form the early transcription complex, which also contains the core RNA polymerase. ETF heterodimer binds to early gene promoters. The protein is Early transcription factor 70 kDa subunit (OPG118) of Vaccinia virus (strain Ankara) (VACV).